The chain runs to 640 residues: Threonine--tRNA ligase (640 aa).

The TGS domain occupies 1 to 61 (MPVITLPDGS…SNDATLQIIT (61 aa)). Positions 242 to 533 (DHRKIGKQLD…LIEHYAGVFP (292 aa)) are catalytic. Residues C333, H384, and H510 each contribute to the Zn(2+) site.

The protein belongs to the class-II aminoacyl-tRNA synthetase family. In terms of assembly, homodimer. The cofactor is Zn(2+).

It localises to the cytoplasm. It carries out the reaction tRNA(Thr) + L-threonine + ATP = L-threonyl-tRNA(Thr) + AMP + diphosphate + H(+). Functionally, catalyzes the attachment of threonine to tRNA(Thr) in a two-step reaction: L-threonine is first activated by ATP to form Thr-AMP and then transferred to the acceptor end of tRNA(Thr). Also edits incorrectly charged L-seryl-tRNA(Thr). The sequence is that of Threonine--tRNA ligase from Pseudomonas putida (strain ATCC 47054 / DSM 6125 / CFBP 8728 / NCIMB 11950 / KT2440).